We begin with the raw amino-acid sequence, 442 residues long: ATP-dependent protease ATPase subunit HslU (442 aa).

ATP-binding positions include isoleucine 18, 60–65, aspartate 255, glutamate 320, and arginine 392; that span reads GVGKTE.

The protein belongs to the ClpX chaperone family. HslU subfamily. In terms of assembly, a double ring-shaped homohexamer of HslV is capped on each side by a ring-shaped HslU homohexamer. The assembly of the HslU/HslV complex is dependent on binding of ATP.

Its subcellular location is the cytoplasm. ATPase subunit of a proteasome-like degradation complex; this subunit has chaperone activity. The binding of ATP and its subsequent hydrolysis by HslU are essential for unfolding of protein substrates subsequently hydrolyzed by HslV. HslU recognizes the N-terminal part of its protein substrates and unfolds these before they are guided to HslV for hydrolysis. The sequence is that of ATP-dependent protease ATPase subunit HslU from Shewanella putrefaciens (strain CN-32 / ATCC BAA-453).